The following is a 278-amino-acid chain: Urease accessory protein UreD (278 aa).

The protein belongs to the UreD family. In terms of assembly, ureD, UreF and UreG form a complex that acts as a GTP-hydrolysis-dependent molecular chaperone, activating the urease apoprotein by helping to assemble the nickel containing metallocenter of UreC. The UreE protein probably delivers the nickel.

It localises to the cytoplasm. Required for maturation of urease via the functional incorporation of the urease nickel metallocenter. The protein is Urease accessory protein UreD of Pseudomonas putida (strain ATCC 700007 / DSM 6899 / JCM 31910 / BCRC 17059 / LMG 24140 / F1).